A 1092-amino-acid polypeptide reads, in one-letter code: Isoleucine--tRNA ligase (1092 aa).

Residues 53 to 63 (PFANGLPHYGH) carry the 'HIGH' region motif. Residues 613–617 (KLSKR) carry the 'KMSKS' region motif. ATP is bound at residue Lys-616.

Belongs to the class-I aminoacyl-tRNA synthetase family. IleS type 2 subfamily. In terms of assembly, monomer. The cofactor is Zn(2+).

It localises to the cytoplasm. The catalysed reaction is tRNA(Ile) + L-isoleucine + ATP = L-isoleucyl-tRNA(Ile) + AMP + diphosphate. Catalyzes the attachment of isoleucine to tRNA(Ile). As IleRS can inadvertently accommodate and process structurally similar amino acids such as valine, to avoid such errors it has two additional distinct tRNA(Ile)-dependent editing activities. One activity is designated as 'pretransfer' editing and involves the hydrolysis of activated Val-AMP. The other activity is designated 'posttransfer' editing and involves deacylation of mischarged Val-tRNA(Ile). The protein is Isoleucine--tRNA ligase of Rickettsia conorii (strain ATCC VR-613 / Malish 7).